Consider the following 136-residue polypeptide: MSTPNLYDSTNKPLYGERLIEESKIICFDNPNKKRIYEISIELPEFTCKCPFSGYPDFAKLNIFYQPNSKVYELKSLKLYINHFRDLKISHEEVVNRIMDDLLNAAAPHWIHLNADFNPRGNVSMKLDIYSGQKRN.

Cys50 serves as the catalytic Thioimide intermediate. The active-site Proton donor is Asp57. Substrate is bound by residues 72–74 (YEL) and 91–92 (HE).

It belongs to the GTP cyclohydrolase I family. QueF type 1 subfamily.

It localises to the cytoplasm. It catalyses the reaction 7-aminomethyl-7-carbaguanine + 2 NADP(+) = 7-cyano-7-deazaguanine + 2 NADPH + 3 H(+). It participates in tRNA modification; tRNA-queuosine biosynthesis. In terms of biological role, catalyzes the NADPH-dependent reduction of 7-cyano-7-deazaguanine (preQ0) to 7-aminomethyl-7-deazaguanine (preQ1). This is NADPH-dependent 7-cyano-7-deazaguanine reductase from Prochlorococcus marinus (strain MIT 9515).